The primary structure comprises 373 residues: D-alanine--D-alanine ligase (373 aa).

One can recognise an ATP-grasp domain in the interval 156-363; it reads KKLLAAEGLP…YPTLLAAMVD (208 aa). An ATP-binding site is contributed by 184 to 239; sequence RERLGLPVFVKPARGGSSIGVSRVTAWDELPAAVALARRHDPKVIVEAAVIGRELE. Mg(2+) contacts are provided by D318, E330, and N332.

The protein belongs to the D-alanine--D-alanine ligase family. The cofactor is Mg(2+). Mn(2+) serves as cofactor.

It localises to the cytoplasm. The enzyme catalyses 2 D-alanine + ATP = D-alanyl-D-alanine + ADP + phosphate + H(+). The protein operates within cell wall biogenesis; peptidoglycan biosynthesis. Cell wall formation. In Mycolicibacterium smegmatis (strain ATCC 700084 / mc(2)155) (Mycobacterium smegmatis), this protein is D-alanine--D-alanine ligase.